Consider the following 62-residue polypeptide: Photosystem II reaction center protein Z (62 aa).

2 helical membrane-spanning segments follow: residues 8–28 (ALFA…VVLA) and 41–61 (FSGI…NSFV).

The protein belongs to the PsbZ family. PSII is composed of 1 copy each of membrane proteins PsbA, PsbB, PsbC, PsbD, PsbE, PsbF, PsbH, PsbI, PsbJ, PsbK, PsbL, PsbM, PsbT, PsbY, PsbZ, Psb30/Ycf12, at least 3 peripheral proteins of the oxygen-evolving complex and a large number of cofactors. It forms dimeric complexes.

Its subcellular location is the plastid. The protein localises to the chloroplast thylakoid membrane. Functionally, may control the interaction of photosystem II (PSII) cores with the light-harvesting antenna, regulates electron flow through the 2 photosystem reaction centers. PSII is a light-driven water plastoquinone oxidoreductase, using light energy to abstract electrons from H(2)O, generating a proton gradient subsequently used for ATP formation. This chain is Photosystem II reaction center protein Z, found in Chlorella vulgaris (Green alga).